The chain runs to 87 residues: Small ribosomal subunit protein uS17 (87 aa).

Belongs to the universal ribosomal protein uS17 family. Part of the 30S ribosomal subunit.

One of the primary rRNA binding proteins, it binds specifically to the 5'-end of 16S ribosomal RNA. The protein is Small ribosomal subunit protein uS17 of Exiguobacterium sibiricum (strain DSM 17290 / CCUG 55495 / CIP 109462 / JCM 13490 / 255-15).